The following is a 1068-amino-acid chain: Rho family-interacting cell polarization regulator 2 (1068 aa).

Ser21 and Ser37 each carry phosphoserine; in isoform. Residues 45–73 are disordered; it reads LKKPQAKLKKMHNLGHKNNNPPKEPQPKR. Residues 48–59 are compositionally biased toward basic residues; sequence PQAKLKKMHNLG. The involved in cell filopodia formation stretch occupies residues 55–113; the sequence is MHNLGHKNNNPPKEPQPKRVEEVYRALKNGLDEYLEVHQTELDKLTAQLKDMKRNSRLG. The stretch at 83 to 112 forms a coiled coil; that stretch reads NGLDEYLEVHQTELDKLTAQLKDMKRNSRL. The residue at position 341 (Ser341) is a Phosphoserine; in isoform 2. The segment covering 474 to 491 has biased composition (polar residues); sequence QNEGMDDTSSASSRNSLG. Residues 474–524 form a disordered region; that stretch reads QNEGMDDTSSASSRNSLGEGQEPKSHLKEEDPEEPRKPASAPSEACRRQSS. Over residues 494–510 the composition is skewed to basic and acidic residues; sequence QEPKSHLKEEDPEEPRK. The residue at position 523 (Ser523) is a Phosphoserine; in isoform 2. Ser573 is subject to Phosphoserine. Ser585 is subject to Phosphoserine; in isoform 2. A coiled-coil region spans residues 768–793; sequence VARSLLEKLSRQIQVMEKLAAVSDEN.

The protein belongs to the RIPOR family. As to quaternary structure, homooligomer; homooligomerization is regulated by RHOC and leads to the formation of concatemers through the association of N- and C-termini. Interacts with 14-3-3 proteins; these interactions occur during myogenic cell differentiation. Interacts with HDAC6; this interaction occurs during early myogenic differentiation and prevents HDAC6 to deacetylate tubulin. Interacts with DYSF; this interaction occurs during early myogenic differentiation. Interacts with MYOF. Interacts with RHOC. Isoform 1 and isoform 2 interact (via active GTP- or inactive GDP-bound forms) with RHOA; these interactions are direct, block the loading of GTP to RHOA and decrease upon chemokine CCL19 stimulation in primary T lymphocytes. Isoform 2 interacts (phosphorylated form) with HDAC6; this interaction induces T cell proliferation arrest. Isoform 2 interacts (phosphorylated form) with 14-3-3 proteins; these interactions induces T cell proliferation arrest. Isoform 2 interacts with 14-3-3 proteins. Isoform 2 interacts (via phosphorylated form) with YWHAB; this interaction occurs in a chemokine-dependent manner and does not compete for binding of RIPOR2 with RHOA nor blocks inhibition of RIPOR2-mediated RHOA activity. Isoform 2 interacts with YWHAE. Isoform 2 interacts with YWHAQ. Phosphorylated. Isoform 2 is phosphorylated in T cells. Chemokine-induced phosphorylation of isoform 2 in neutrophils occurs in a PKC- and AKT-dependent manner, resulting in RIPOR2 interaction with YWHAB and stabilization. Isoform 2 is phosphorylated by PKCA, AKT1 and MAPKAPK1A; in vitro. Post-translationally, acetylated during myogenic differentiation. As to expression, expressed in primary fetal mononuclear myoblast. Expressed strongly in naive T lymphocytes. Expressed weakly in activated T lymphocytes (at protein level). Expressed in blood cells and adult tissues of hematopoietic origin, such as the secondary lymphoid organs. Expressed in cytotrophoblast.

The protein localises to the cytoplasm. It is found in the cytoskeleton. Its subcellular location is the cell projection. It localises to the filopodium. The protein resides in the stereocilium. The protein localises to the stereocilium membrane. It is found in the apical cell membrane. Acts as an inhibitor of the small GTPase RHOA and plays several roles in the regulation of myoblast and hair cell differentiation, lymphocyte T proliferation and neutrophil polarization. Inhibits chemokine-induced T lymphocyte responses, such as cell adhesion, polarization and migration. Involved also in the regulation of neutrophil polarization, chemotaxis and adhesion. Required for normal development of inner and outer hair cell stereocilia within the cochlea of the inner ear. Plays a role for maintaining the structural organization of the basal domain of stereocilia. Involved in mechanosensory hair cell function. Required for normal hearing. Functionally, acts as an inhibitor of the small GTPase RHOA. Plays a role in fetal mononuclear myoblast differentiation by promoting filopodia and myotube formation. Maintains naive T lymphocytes in a quiescent state. The chain is Rho family-interacting cell polarization regulator 2 (RIPOR2) from Homo sapiens (Human).